The following is a 99-amino-acid chain: Ubiquitin-related modifier 1 homolog (99 aa).

Position 99 is a 1-thioglycine (G99). G99 participates in a covalent cross-link: Glycyl lysine isopeptide (Gly-Lys) (interchain with K-? in acceptor proteins).

This sequence belongs to the URM1 family. As to quaternary structure, interacts with cer. C-terminal thiocarboxylation occurs in 2 steps, it is first acyl-adenylated (-COAMP) via the hesA/moeB/thiF part of the MOCS3 homolog, then thiocarboxylated (-COSH) via the rhodanese domain of the MOCS3 homolog.

The protein resides in the cytoplasm. It participates in tRNA modification; 5-methoxycarbonylmethyl-2-thiouridine-tRNA biosynthesis. Functionally, acts as a sulfur carrier required for 2-thiolation of mcm(5)S(2)U at tRNA wobble positions of cytosolic tRNA(Lys), tRNA(Glu) and tRNA(Gln). Serves as sulfur donor in tRNA 2-thiolation reaction by being thiocarboxylated (-COSH) at its C-terminus by MOCS3. The sulfur is then transferred to tRNA to form 2-thiolation of mcm(5)S(2)U. Also acts as a ubiquitin-like protein (UBL) that is covalently conjugated via an isopeptide bond to lysine residues of target proteins such as Prx2/Jafrac1, Ciao1, Eip71CD and GILT1. The thiocarboxylated form serves as substrate for conjugation and oxidative stress specifically induces the formation of UBL-protein conjugates. This is Ubiquitin-related modifier 1 homolog from Drosophila virilis (Fruit fly).